The chain runs to 318 residues: Methionyl-tRNA formyltransferase (318 aa).

Residue 112-115 (SILP) participates in (6S)-5,6,7,8-tetrahydrofolate binding.

It belongs to the Fmt family.

The enzyme catalyses L-methionyl-tRNA(fMet) + (6R)-10-formyltetrahydrofolate = N-formyl-L-methionyl-tRNA(fMet) + (6S)-5,6,7,8-tetrahydrofolate + H(+). Attaches a formyl group to the free amino group of methionyl-tRNA(fMet). The formyl group appears to play a dual role in the initiator identity of N-formylmethionyl-tRNA by promoting its recognition by IF2 and preventing the misappropriation of this tRNA by the elongation apparatus. This chain is Methionyl-tRNA formyltransferase, found in Haemophilus influenzae (strain PittEE).